An 825-amino-acid chain; its full sequence is Endochitinase A1 (825 aa).

The N-terminal stretch at 1–22 (MVSSKLSFVATAVAALAPLASA) is a signal peptide. Residues 29–338 (SNLAIYWGQG…DHMKDILLHC (310 aa)) enclose the GH18 domain. E174 (proton donor) is an active-site residue. 3 disordered regions span residues 338-568 (CDPS…TTTA), 680-736 (PVTE…VSTS), and 750-792 (PLIL…YTQE). The segment covering 344–554 (VTSSSAVPSS…STDESSTTVG (211 aa)) has biased composition (low complexity). A glycan (N-linked (GlcNAc...) asparagine) is linked at N559. Residues 701–712 (EGSNPTQPSGAS) are compositionally biased toward polar residues. N717 is a glycosylation site (N-linked (GlcNAc...) asparagine). A compositionally biased stretch (polar residues) spans 772 to 792 (PSGQNSGSSSHVPIPPSYTQE). The GPI-anchor amidated glycine moiety is linked to residue G800. Positions 801–825 (AASRVTGLGHGLVLTVLTLSAFFVL) are cleaved as a propeptide — removed in mature form.

The protein belongs to the glycosyl hydrolase 18 family. Chitinase class III subfamily. Post-translationally, O-mannosylated by pmt4.

Its subcellular location is the cell membrane. It localises to the secreted. The protein resides in the cell wall. It carries out the reaction Random endo-hydrolysis of N-acetyl-beta-D-glucosaminide (1-&gt;4)-beta-linkages in chitin and chitodextrins.. With respect to regulation, the cyclic peptide natural product argifin acts as a specific inhibitor. In terms of biological role, GPI-anchored chitinase involved in the degradation of chitin, a component of the cell walls of fungi and exoskeletal elements of some animals (including worms and arthropods). Required to reshape the cell wall at the sites where cell wall remodeling and/or cell wall maturation actively take place such as sites of conidia formation. The protein is Endochitinase A1 (chiA1) of Aspergillus fumigatus (Neosartorya fumigata).